Reading from the N-terminus, the 546-residue chain is Probable protein kinase UbiB (546 aa).

Residues 124–502 (DFDIKPLASA…HVRQGQSRYL (379 aa)) enclose the Protein kinase domain. Residues 130 to 138 (LASASIAQV) and Lys153 contribute to the ATP site. The active-site Proton acceptor is Asp288. 2 helical membrane passes run 501–521 (YLLG…VSRP) and 522–542 (EWGL…FVGW).

This sequence belongs to the ABC1 family. UbiB subfamily.

The protein resides in the cell inner membrane. It participates in cofactor biosynthesis; ubiquinone biosynthesis [regulation]. Functionally, is probably a protein kinase regulator of UbiI activity which is involved in aerobic coenzyme Q (ubiquinone) biosynthesis. This is Probable protein kinase UbiB from Escherichia fergusonii (strain ATCC 35469 / DSM 13698 / CCUG 18766 / IAM 14443 / JCM 21226 / LMG 7866 / NBRC 102419 / NCTC 12128 / CDC 0568-73).